A 694-amino-acid polypeptide reads, in one-letter code: Elongation factor G (694 aa).

The 283-residue stretch at Lys6 to Thr288 folds into the tr-type G domain. Residues Ala15 to Thr22, Asp86 to His90, and Asn140 to Asp143 contribute to the GTP site.

The protein belongs to the TRAFAC class translation factor GTPase superfamily. Classic translation factor GTPase family. EF-G/EF-2 subfamily.

The protein resides in the cytoplasm. Catalyzes the GTP-dependent ribosomal translocation step during translation elongation. During this step, the ribosome changes from the pre-translocational (PRE) to the post-translocational (POST) state as the newly formed A-site-bound peptidyl-tRNA and P-site-bound deacylated tRNA move to the P and E sites, respectively. Catalyzes the coordinated movement of the two tRNA molecules, the mRNA and conformational changes in the ribosome. The sequence is that of Elongation factor G from Legionella pneumophila (strain Corby).